A 91-amino-acid chain; its full sequence is MPRSLKKGPFIDLHLLKKVEAAVEKNDKKPIKTWSRRSMIIPDMIGLTIAVHNGRQHVPVFVSDEMVGHKLGEFAPTRTYRGHVADKKAKR.

The protein belongs to the universal ribosomal protein uS19 family.

In terms of biological role, protein S19 forms a complex with S13 that binds strongly to the 16S ribosomal RNA. The protein is Small ribosomal subunit protein uS19 of Pseudoalteromonas atlantica (strain T6c / ATCC BAA-1087).